Here is a 202-residue protein sequence, read N- to C-terminus: Recombination protein RecR (202 aa).

The C4-type zinc-finger motif lies at 57–72 (CGVCRTFTEQPCCDIC). A Toprim domain is found at 81 to 176 (GQICVVESPS…STTKIAHGVP (96 aa)).

Belongs to the RecR family.

May play a role in DNA repair. It seems to be involved in an RecBC-independent recombinational process of DNA repair. It may act with RecF and RecO. This chain is Recombination protein RecR, found in Hamiltonella defensa subsp. Acyrthosiphon pisum (strain 5AT).